A 162-amino-acid polypeptide reads, in one-letter code: NADH-quinone oxidoreductase subunit I (162 aa).

4Fe-4S ferredoxin-type domains follow at residues 53–83 (LRRY…IEAE) and 93–122 (TRYD…EGPN). [4Fe-4S] cluster is bound by residues C63, C66, C69, C73, C102, C105, C108, and C112.

It belongs to the complex I 23 kDa subunit family. As to quaternary structure, NDH-1 is composed of 14 different subunits. Subunits NuoA, H, J, K, L, M, N constitute the membrane sector of the complex. [4Fe-4S] cluster serves as cofactor.

The protein resides in the cell inner membrane. The catalysed reaction is a quinone + NADH + 5 H(+)(in) = a quinol + NAD(+) + 4 H(+)(out). In terms of biological role, NDH-1 shuttles electrons from NADH, via FMN and iron-sulfur (Fe-S) centers, to quinones in the respiratory chain. The immediate electron acceptor for the enzyme in this species is believed to be ubiquinone. Couples the redox reaction to proton translocation (for every two electrons transferred, four hydrogen ions are translocated across the cytoplasmic membrane), and thus conserves the redox energy in a proton gradient. The chain is NADH-quinone oxidoreductase subunit I from Sphingopyxis alaskensis (strain DSM 13593 / LMG 18877 / RB2256) (Sphingomonas alaskensis).